The primary structure comprises 97 residues: Large ribosomal subunit protein eL21 (97 aa).

Over residues 1–24 (MVQKAHSFRRKTRKKLRKHPRRRG) the composition is skewed to basic residues. Positions 1-25 (MVQKAHSFRRKTRKKLRKHPRRRGL) are disordered.

This sequence belongs to the eukaryotic ribosomal protein eL21 family.

The chain is Large ribosomal subunit protein eL21 (rpl21e) from Pyrococcus abyssi (strain GE5 / Orsay).